The following is a 541-amino-acid chain: Propionyl-CoA carboxylase beta chain, mitochondrial (541 aa).

A mitochondrion-targeting transit peptide spans 1 to 28 (MAAAIRIRAVAAGARLSVLNCGLGITTR). The 259-residue stretch at 34–292 (PVSVKERIDN…SSQDPAPIRE (259 aa)) folds into the CoA carboxyltransferase N-terminal domain. Residues 34–535 (PVSVKERIDN…SKKVHRPWRK (502 aa)) are carboxyltransferase. Residue S73 is modified to Phosphoserine. Residue K101 is modified to N6-acetyllysine; alternate. Residue K101 is modified to N6-succinyllysine; alternate. N6-succinyllysine is present on K250. One can recognise a CoA carboxyltransferase C-terminal domain in the interval 296–535 (PSDRLVPELD…SKKVHRPWRK (240 aa)). The acyl-CoA binding stretch occupies residues 327–360 (DEREFFEIMPSYAKNIVVGFARMNGRTVGIVGNQ). An N6-acetyllysine; alternate mark is found at K476 and K491. N6-succinyllysine; alternate occurs at positions 476 and 491.

The protein belongs to the AccD/PCCB family. The holoenzyme is a dodecamer composed of 6 PCCA/alpha subunits and 6 PCCB/beta subunits. In terms of tissue distribution, broadly expressed. Most abundantly expressed in the kidney, liver, small intestine and stomach.

It is found in the mitochondrion matrix. The catalysed reaction is propanoyl-CoA + hydrogencarbonate + ATP = (S)-methylmalonyl-CoA + ADP + phosphate + H(+). It carries out the reaction butanoyl-CoA + hydrogencarbonate + ATP = (2S)-ethylmalonyl-CoA + ADP + phosphate + H(+). Its pathway is metabolic intermediate metabolism; propanoyl-CoA degradation; succinyl-CoA from propanoyl-CoA: step 1/3. In terms of biological role, this is one of the 2 subunits of the biotin-dependent propionyl-CoA carboxylase (PCC), a mitochondrial enzyme involved in the catabolism of odd chain fatty acids, branched-chain amino acids isoleucine, threonine, methionine, and valine and other metabolites. Propionyl-CoA carboxylase catalyzes the carboxylation of propionyl-CoA/propanoyl-CoA to D-methylmalonyl-CoA/(S)-methylmalonyl-CoA. Within the holoenzyme, the alpha subunit catalyzes the ATP-dependent carboxylation of the biotin carried by the biotin carboxyl carrier (BCC) domain, while the beta subunit then transfers the carboxyl group from carboxylated biotin to propionyl-CoA. Propionyl-CoA carboxylase also significantly acts on butyryl-CoA/butanoyl-CoA, which is converted to ethylmalonyl-CoA/(2S)-ethylmalonyl-CoA. Other alternative minor substrates include (2E)-butenoyl-CoA/crotonoyl-CoA. This Mus musculus (Mouse) protein is Propionyl-CoA carboxylase beta chain, mitochondrial.